Consider the following 141-residue polypeptide: Calcium-binding protein SPEC 2D (141 aa).

4 EF-hand domains span residues 10–42, 43–72, 73–107, and 108–141; these read DQIKEYKTKFDAFDRNNDGNFPTMFLGNAMKSV, GHVLTAAELENSRRVRKGTTTFPQFLAMIL, DKKCRKVFKAMDKDDKDKLLSADEVRQAMLSFDRQ, and ITEDKIKEMIEKADFPNDGKCSLEEFVKMVMNFC. Residues D23, N25, D27, and N29 each coordinate Ca(2+). Residues D84, D86, K90, D95, D121, D125, K127, and E132 each contribute to the Ca(2+) site.

Found in cell lineages giving rise to the aboral ectoderm, a squamous epithelium covering the surface of the late stage embryo and larva.

Its function is as follows. Calcium-binding protein involved in larval development and metamorphosis. Likely to function as calcium buffers mediating the transport of calcium from the sea water to the blastocoel where calcium is required for skeleton formation. The chain is Calcium-binding protein SPEC 2D (SPEC2D) from Strongylocentrotus purpuratus (Purple sea urchin).